Reading from the N-terminus, the 312-residue chain is Protease HtpX homolog (312 aa).

2 helical membrane passes run 6–26 and 28–48; these read TAVLLAGLTALFMVVGFAIGG and GGMMVALLVAAGMNLFSYWYA. Histidine 130 serves as a coordination point for Zn(2+). Glutamate 131 is an active-site residue. Histidine 134 contacts Zn(2+). Helical transmembrane passes span 145 to 165 and 173 to 193; these read ITASIAGAISMLANFGLFFGG and PFGGISAILMAILAPIAAMVV. Zn(2+) is bound at residue glutamate 202. The segment covering 287 to 297 has biased composition (low complexity); that stretch reads PAPARAAPARG. The tract at residues 287–312 is disordered; the sequence is PAPARAAPARGPWGGNTGGTRRGPWG. Residues 298 to 312 are compositionally biased toward gly residues; the sequence is PWGGNTGGTRRGPWG.

It belongs to the peptidase M48B family. Zn(2+) is required as a cofactor.

It localises to the cell inner membrane. The protein is Protease HtpX homolog of Azorhizobium caulinodans (strain ATCC 43989 / DSM 5975 / JCM 20966 / LMG 6465 / NBRC 14845 / NCIMB 13405 / ORS 571).